The sequence spans 540 residues: MAAKDVKFGNDARVKMLRGVNVLADAVKVTLGPKGRNVVLDKSFGAPTITKDGVSVAREIELEDKFENMGAQMVKEVASKANDAAGDGTTTATVLAQSIITEGLKAVAAGMNPMDLKRGIDQAVIAAVDELKKLSVPCSDSKAIAQVGTISANSDATVGELIAQAMEKVGKEGVITVEEGTGLQDELDVVEGMQFDRGYLSPYFINKPETGAVELESPFILLADKKISNIREMLPVLEAVAKAGKPLLIIAEDVEGEALATLVVNTMRGIVKVAAVKAPGFGDRRKAMLQDIAVLTGGTVISEEIGMELEKAGLEDMGQAKRVVINKDTTIIIDGTGEEATINGRVTQIRQQIEEATSDYDREKLQERVAKLAGGVAVLKVGAATEVEMKEKKARVEDALHATRAAVEEGVVAGGGVALVRVASKLAELRGQNEDQNVGIKVALRAMESPLRQIVSNAGEEPSVVTNNVKAGEGNYGYNAQTEEYGDMIDFGILDPTKVTRSALQYAASVAGLMITTECMVTDLPKGDAPDLGAGGGMGG.

Residues 30-33 (TLGP), K51, 87-91 (DGTTT), G415, and D495 each bind ATP.

The protein belongs to the chaperonin (HSP60) family. Forms a cylinder of 14 subunits composed of two heptameric rings stacked back-to-back. Interacts with the co-chaperonin GroES.

It localises to the cytoplasm. It carries out the reaction ATP + H2O + a folded polypeptide = ADP + phosphate + an unfolded polypeptide.. Its function is as follows. Together with its co-chaperonin GroES, plays an essential role in assisting protein folding. The GroEL-GroES system forms a nano-cage that allows encapsulation of the non-native substrate proteins and provides a physical environment optimized to promote and accelerate protein folding. In Erwinia aphidicola, this protein is Chaperonin GroEL.